A 127-amino-acid polypeptide reads, in one-letter code: DNA-directed RNA polymerase subunit omega (127 aa).

Belongs to the RNA polymerase subunit omega family. In terms of assembly, the RNAP catalytic core consists of 2 alpha, 1 beta, 1 beta' and 1 omega subunit. When a sigma factor is associated with the core the holoenzyme is formed, which can initiate transcription.

It catalyses the reaction RNA(n) + a ribonucleoside 5'-triphosphate = RNA(n+1) + diphosphate. In terms of biological role, promotes RNA polymerase assembly. Latches the N- and C-terminal regions of the beta' subunit thereby facilitating its interaction with the beta and alpha subunits. This is DNA-directed RNA polymerase subunit omega from Rickettsia canadensis (strain McKiel).